A 606-amino-acid chain; its full sequence is Elongation factor 4 (606 aa).

Residues 10–192 (KNIRNFSIIA…ALVARVPPPQ (183 aa)) enclose the tr-type G domain. Residues 22 to 27 (DHGKST) and 139 to 142 (NKID) contribute to the GTP site.

This sequence belongs to the TRAFAC class translation factor GTPase superfamily. Classic translation factor GTPase family. LepA subfamily.

The protein resides in the cell inner membrane. It carries out the reaction GTP + H2O = GDP + phosphate + H(+). Its function is as follows. Required for accurate and efficient protein synthesis under certain stress conditions. May act as a fidelity factor of the translation reaction, by catalyzing a one-codon backward translocation of tRNAs on improperly translocated ribosomes. Back-translocation proceeds from a post-translocation (POST) complex to a pre-translocation (PRE) complex, thus giving elongation factor G a second chance to translocate the tRNAs correctly. Binds to ribosomes in a GTP-dependent manner. This is Elongation factor 4 from Nitrosococcus oceani (strain ATCC 19707 / BCRC 17464 / JCM 30415 / NCIMB 11848 / C-107).